Reading from the N-terminus, the 298-residue chain is Ribosomal RNA small subunit methyltransferase H (298 aa).

S-adenosyl-L-methionine is bound by residues 38 to 40, Asp-57, Phe-84, Asp-100, and Gln-107; that span reads GGH.

This sequence belongs to the methyltransferase superfamily. RsmH family.

The protein localises to the cytoplasm. It catalyses the reaction cytidine(1402) in 16S rRNA + S-adenosyl-L-methionine = N(4)-methylcytidine(1402) in 16S rRNA + S-adenosyl-L-homocysteine + H(+). In terms of biological role, specifically methylates the N4 position of cytidine in position 1402 (C1402) of 16S rRNA. The polypeptide is Ribosomal RNA small subunit methyltransferase H (Acaryochloris marina (strain MBIC 11017)).